Consider the following 370-residue polypeptide: Prolactin-releasing peptide receptor (370 aa).

The disordered stretch occupies residues 1–34 (MTSLPPGTTGDPDLFSGPSPAGSTPANQSAEASE). The Extracellular segment spans residues 1-62 (MTSLPPGTTG…LQLVHQLKGL (62 aa)). Residues 21 to 34 (AGSTPANQSAEASE) show a composition bias toward polar residues. 2 N-linked (GlcNAc...) asparagine glycosylation sites follow: Asn-27 and Asn-36. Residues 63-83 (IVMLYSIVVVVGLVGNCLLVL) traverse the membrane as a helical segment. The Cytoplasmic portion of the chain corresponds to 84 to 101 (VIARVRRLHNVTNFLIGN). The chain crosses the membrane as a helical span at residues 102-122 (LALSDVLMCAACVPLTLAYAF). The Extracellular segment spans residues 123–126 (EPRG). The helical transmembrane segment at 127-147 (WVFGGGLCHLVFFLQPVTVYV) threads the bilayer. An intrachain disulfide couples Cys-134 to Cys-211. At 148–175 (SVFTLTTIAVDRYVVLVHPLRRRISLKL) the chain is on the cytoplasmic side. A helical membrane pass occupies residues 176–196 (SAYAVLGIWALSAVLALPAAV). Residues 197 to 223 (HTYHVELKPHDVRLCEEFWGSQERQRQ) are Extracellular-facing. Residues 224–244 (IYAWGLLLGTYLLPLLAILLS) traverse the membrane as a helical segment. At 245–276 (YVRVSVKLRNRVVPGSVTQSQADWDRARRRRT) the chain is on the cytoplasmic side. Residues 277–297 (FCLLVVVVVVFALCWLPLHIF) form a helical membrane-spanning segment. The Extracellular portion of the chain corresponds to 298–317 (NLLRDLDPRAIDPYAFGLVQ). The chain crosses the membrane as a helical span at residues 318–338 (LLCHWLAMSSACYNPFIYAWL). Residues 339–370 (HDSFREELRKMLLSWPRKIVPHGQNMTVSVVI) are Cytoplasmic-facing. The tract at residues 365-370 (TVSVVI) is required for interaction with GRIP1, GRIP2 and PICK1.

Belongs to the G-protein coupled receptor 1 family. As to quaternary structure, interacts through its C-terminal region with the PDZ domain-containing proteins GRIP1, GRIP2 and PICK1. Interacts with PDZ domains 4 and 5 of GRIP1 and with the PDZ domain of PICK1. In terms of tissue distribution, widely expressed, with highest levels in pituitary, cerebellum, and hypothalamus.

It localises to the cell membrane. Functionally, receptor for prolactin-releasing peptide (PrRP). Implicated in lactation, regulation of food intake and pain-signal processing. This is Prolactin-releasing peptide receptor (Prlhr) from Rattus norvegicus (Rat).